Here is a 242-residue protein sequence, read N- to C-terminus: DNA repair protein RecO (242 aa).

Belongs to the RecO family. Monomer.

Its function is as follows. Involved in DNA repair and RecF pathway recombination. The polypeptide is DNA repair protein RecO (Shigella flexneri).